A 276-amino-acid polypeptide reads, in one-letter code: 4-hydroxy-3-methylbut-2-enyl diphosphate reductase (276 aa).

Position 12 (Cys-12) interacts with [4Fe-4S] cluster. The (2E)-4-hydroxy-3-methylbut-2-enyl diphosphate site is built by His-36 and His-71. His-36 and His-71 together coordinate dimethylallyl diphosphate. Isopentenyl diphosphate contacts are provided by His-36 and His-71. Cys-93 contacts [4Fe-4S] cluster. (2E)-4-hydroxy-3-methylbut-2-enyl diphosphate is bound at residue His-121. His-121 serves as a coordination point for dimethylallyl diphosphate. His-121 contacts isopentenyl diphosphate. Glu-123 serves as the catalytic Proton donor. Residue Thr-160 coordinates (2E)-4-hydroxy-3-methylbut-2-enyl diphosphate. Cys-188 contacts [4Fe-4S] cluster. Ser-216, Ser-217, Asn-218, and Ser-259 together coordinate (2E)-4-hydroxy-3-methylbut-2-enyl diphosphate. 4 residues coordinate dimethylallyl diphosphate: Ser-216, Ser-217, Asn-218, and Ser-259. Isopentenyl diphosphate-binding residues include Ser-216, Ser-217, Asn-218, and Ser-259.

It belongs to the IspH family. [4Fe-4S] cluster is required as a cofactor.

It catalyses the reaction isopentenyl diphosphate + 2 oxidized [2Fe-2S]-[ferredoxin] + H2O = (2E)-4-hydroxy-3-methylbut-2-enyl diphosphate + 2 reduced [2Fe-2S]-[ferredoxin] + 2 H(+). The catalysed reaction is dimethylallyl diphosphate + 2 oxidized [2Fe-2S]-[ferredoxin] + H2O = (2E)-4-hydroxy-3-methylbut-2-enyl diphosphate + 2 reduced [2Fe-2S]-[ferredoxin] + 2 H(+). It participates in isoprenoid biosynthesis; dimethylallyl diphosphate biosynthesis; dimethylallyl diphosphate from (2E)-4-hydroxy-3-methylbutenyl diphosphate: step 1/1. The protein operates within isoprenoid biosynthesis; isopentenyl diphosphate biosynthesis via DXP pathway; isopentenyl diphosphate from 1-deoxy-D-xylulose 5-phosphate: step 6/6. Catalyzes the conversion of 1-hydroxy-2-methyl-2-(E)-butenyl 4-diphosphate (HMBPP) into a mixture of isopentenyl diphosphate (IPP) and dimethylallyl diphosphate (DMAPP). Acts in the terminal step of the DOXP/MEP pathway for isoprenoid precursor biosynthesis. This is 4-hydroxy-3-methylbut-2-enyl diphosphate reductase from Nautilia profundicola (strain ATCC BAA-1463 / DSM 18972 / AmH).